The primary structure comprises 162 residues: Cyclic pyranopterin monophosphate synthase (162 aa).

Substrate is bound by residues 75 to 77 (LCH) and 113 to 114 (ME). D128 is an active-site residue.

It belongs to the MoaC family. As to quaternary structure, homohexamer; trimer of dimers.

The enzyme catalyses (8S)-3',8-cyclo-7,8-dihydroguanosine 5'-triphosphate = cyclic pyranopterin phosphate + diphosphate. The protein operates within cofactor biosynthesis; molybdopterin biosynthesis. Catalyzes the conversion of (8S)-3',8-cyclo-7,8-dihydroguanosine 5'-triphosphate to cyclic pyranopterin monophosphate (cPMP). The sequence is that of Cyclic pyranopterin monophosphate synthase from Burkholderia cenocepacia (strain ATCC BAA-245 / DSM 16553 / LMG 16656 / NCTC 13227 / J2315 / CF5610) (Burkholderia cepacia (strain J2315)).